The chain runs to 860 residues: MQEQYRPEDIESNVQLHWQEKQTFKVTEDASKEKYYCLSMLPYPSGRLHMGHVRNYTIGDVISRYQRMLGKNVLQPIGWDAFGLPAEGAAVKNNTAPAPWTYDNIEYMKNQLKLLGFGYDWDREIATCDPDYYRWEQWFFTKLYEKGLVYKKTSAVNWCPHDLTVLANEQVIDGCCWRCDTKVERKEIPQWFIKITDYADQLLNDLDTLESWPEQVKTMQRNWIGRSEGVDITFDVAGSDEKLTVYTTRPDTFMGATYVAVAAGHPLAQQGAVNNPALAEFIEECRNTKVAEAEMATMEKKGMPTGLFAIHPLSGEQVPVWVANFVLMEYGTGAVMAVPAHDQRDWEFATKYGLPIKPVVLALDGSQPDVQAEAMTEKGTLFNSGEFDGLDHQDGFNAIADKLVAKGVGQRKVNYRLRDWGVSRQRYWGAPIPMVTLEDGTVMPTPEDQLPVILPEDVVMDGITSPIKADPEWAKTTVNGQPALRETDTFDTFMESSWYYARYTCPQYDKGMLDPAAANYWLPVDQYVGGIEHAIMHLMYFRFFHKLLRDAGLVDSDEPAKRLLCQGMVLADAFYYSGNSGERVWVSPADAIVERDDKGRIIKATDPQGRELVYAGMSKMSKSKNNGIDPQVMVEKYGADTVRLFMMFASPAEMTLEWQESGVEGANRFLKRVWKLSYEHLEKGAVQPLNVATLTEDQKALRRDLHKTIAKVTDDIGRRQTFNTAIAAVMELMNKLARAPQESEQDRALLQEALLAVVRMLYPFTPHVCFSLWQALGGEGDVDTAAWPQADEQAMVEDSKLVVVQVNGKVRAKITVAADATEEQVRARAAEEHLVAKYLDGVTVRKVIYVPGKLLNLVVG.

Positions 42 to 52 match the 'HIGH' region motif; sequence PYPSGRLHMGH. A 'KMSKS' region motif is present at residues 619–623; that stretch reads KMSKS. Lysine 622 is a binding site for ATP.

Belongs to the class-I aminoacyl-tRNA synthetase family.

The protein localises to the cytoplasm. The enzyme catalyses tRNA(Leu) + L-leucine + ATP = L-leucyl-tRNA(Leu) + AMP + diphosphate. The chain is Leucine--tRNA ligase from Serratia proteamaculans (strain 568).